The following is a 65-amino-acid chain: Putative beta-neurotoxin RjAa12 (65 aa).

The region spanning 1 to 64 (KEGYPVGRDG…VWDSSTNKCG (64 aa)) is the LCN-type CS-alpha/beta domain. 4 disulfides stabilise this stretch: cysteine 11/cysteine 63, cysteine 15/cysteine 37, cysteine 22/cysteine 44, and cysteine 26/cysteine 46.

This sequence belongs to the long (4 C-C) scorpion toxin superfamily. Sodium channel inhibitor family. Beta subfamily. Expressed by the venom gland.

It localises to the secreted. Its function is as follows. Beta toxins bind voltage-independently at site-4 of sodium channels (Nav) and shift the voltage of activation toward more negative potentials thereby affecting sodium channel activation and promoting spontaneous and repetitive firing. The protein is Putative beta-neurotoxin RjAa12 of Rhopalurus junceus (Caribbean blue scorpion).